Reading from the N-terminus, the 318-residue chain is Methionine import ATP-binding protein MetN (318 aa).

The ABC transporter domain maps to 2–237 (IEIKDVGKIF…PEGELKKIIE (236 aa)). 34-41 (GRSGAGKS) serves as a coordination point for ATP.

This sequence belongs to the ABC transporter superfamily. Methionine importer (TC 3.A.1.24) family. In terms of assembly, the complex is composed of two ATP-binding proteins (MetN), two transmembrane proteins (MetI) and a solute-binding protein (MetQ).

The protein localises to the cell membrane. It catalyses the reaction L-methionine(out) + ATP + H2O = L-methionine(in) + ADP + phosphate + H(+). It carries out the reaction D-methionine(out) + ATP + H2O = D-methionine(in) + ADP + phosphate + H(+). In terms of biological role, part of the ABC transporter complex MetNIQ involved in methionine import. Responsible for energy coupling to the transport system. The chain is Methionine import ATP-binding protein MetN from Clostridium tetani (strain Massachusetts / E88).